The sequence spans 410 residues: Elongation factor Tu, chloroplastic (410 aa).

The region spanning Lys10–Glu214 is the tr-type G domain. The tract at residues Gly19 to Thr26 is G1. Residue Gly19–Thr26 coordinates GTP. Thr26 lines the Mg(2+) pocket. The interval Gly60–Asn64 is G2. The G3 stretch occupies residues Asp81–Gly84. Residues Asp81–His85 and Asn136–Asp139 contribute to the GTP site. The segment at Asn136–Asp139 is G4. The tract at residues Ser174–Leu176 is G5.

This sequence belongs to the TRAFAC class translation factor GTPase superfamily. Classic translation factor GTPase family. EF-Tu/EF-1A subfamily.

The protein localises to the plastid. Its subcellular location is the chloroplast. It carries out the reaction GTP + H2O = GDP + phosphate + H(+). Functionally, GTP hydrolase that promotes the GTP-dependent binding of aminoacyl-tRNA to the A-site of ribosomes during protein biosynthesis. The polypeptide is Elongation factor Tu, chloroplastic (tufA) (Chlorokybus atmophyticus (Soil alga)).